A 549-amino-acid chain; its full sequence is Plant intracellular Ras-group-related LRR protein 4 (549 aa).

A compositionally biased stretch (low complexity) spans 119–140 (SPSSNGSVSSRPPLPPATTTAA). The segment at 119–167 (SPSSNGSVSSRPPLPPATTTAARSDSQSSLNFSERAPVRPKDMVSRDDS) is disordered. Residues 141-150 (RSDSQSSLNF) show a composition bias toward polar residues. The span at 154 to 167 (APVRPKDMVSRDDS) shows a compositional bias: basic and acidic residues. S167 carries the post-translational modification Phosphoserine. LRR repeat units follow at residues 245 to 268 (LSSLTSLDLSENHIVVLPNTIGGL), 269 to 291 (SSLTKLDLHSNRIGQLPESIGEL), 293 to 313 (NLVYLNLGSNQLSSLPSAFSR), 314 to 337 (LVRLEELDLSCNNLPILPESIGSL), 339 to 360 (SLKKLDVETNDIEEIPYSIGGC), 362 to 383 (SLIELRADYNKLKALPEAIGKI), 384 to 406 (TTLEILSVRYNNIRQLPTTMSSL), 407 to 430 (ASLKELDVSFNELESVPESLCFAT), 432 to 454 (LVKLNIGNNFADMVSLPRSIGNL), 455 to 476 (EMLEELDISNNQIRVLPDSFKM), and 478 to 500 (TKLRVFRAQENPLHIPPRDIAEK). Residues 501-508 (GPQAVVQY) carry the GVYW; degenerate motif.

Belongs to the SHOC2 family. In terms of tissue distribution, widely expressed.

Leucine-rich repeat protein that likely mediates protein interactions, possibly in the context of signal transduction. This is Plant intracellular Ras-group-related LRR protein 4 (PIRL4) from Arabidopsis thaliana (Mouse-ear cress).